The sequence spans 486 residues: BTB/POZ domain and ankyrin repeat-containing protein BOP (486 aa).

The 91-residue stretch at 25 to 115 (SDVTFSVEGR…LYSGQVSIVP (91 aa)) folds into the BTB domain. Residues 121 to 135 (RPNCGERGCWHTHCS) form a C2HC NPR-type zinc finger. Residues cysteine 124, cysteine 129, histidine 131, and cysteine 134 each coordinate Zn(2+). ANK repeat units follow at residues 257-286 (QKIRRMRRALDSSDVELVKLMVMGEGLNLD), 287-316 (EALALHYAVENCSREVAKALLELGAADVNY), 321-350 (AGKTPLHIAAEMVSPDMVAVLLDHHADPNV), and 354-388 (DNVTPLDILRTLTSDFLFKGAIPGLTHIEPNKLRL). Disordered regions lie at residues 403–442 (EEGNANNNPPSSTTTTLPMYHHPMNDDHNSSSSSGNNHNI) and 464–486 (QMSDDHGGRHGDPAMYHHSHHDY). Low complexity-rich tracts occupy residues 406-418 (NANNNPPSSTTTT) and 432-442 (SSSSSGNNHNI). Residues 466-475 (SDDHGGRHGD) are compositionally biased toward basic and acidic residues.

The protein belongs to the plant 'ANKYRIN-BTB/POZ' family. 'NOOT-BOP-COCH-like' (NBCL) subfamily. In terms of assembly, homodimer. Expressed in xylem vessels and parenchyma cells of pedicel vascular tissue in the abscission zone (AZ). Accumulates in developing root nodules and present in roots, especially in the upper part.

It is found in the nucleus. The protein resides in the cytoplasm. It localises to the cell membrane. The protein operates within protein modification; protein ubiquitination. May act as a substrate-specific adapter of an E3 ubiquitin-protein ligase complex (CUL3-RBX1-BTB) which mediates the ubiquitination and subsequent proteasomal degradation of target proteins. Transcriptional co-regulator involved in promoting the fate and determination of leaf and flower meristems. Required for the abscission of senescent organs, probably by regulating the cell wall disorganization in abscission zones (AZs, e.g. pulvini at the base of leaves). Involved in the coordination of the symbiotic nodule developmental program; promotes the formation of root nodules by interacting directly with APP1 to modulate the expression of the nuclear transcription factor Y subunit (NF-YA1), a key nodulin. Necessary for the robust maintenance of nodule identity throughout the nodule developmental program. In Lupinus luteus (European yellow lupine), this protein is BTB/POZ domain and ankyrin repeat-containing protein BOP.